The primary structure comprises 523 residues: Occludin (523 aa).

The disordered stretch occupies residues 1 to 20 (MSVRPFESPPPYRPDEFKPN). Topologically, residues 1–66 (MSVRPFESPP…KWTSPPGVIR (66 aa)) are cytoplasmic. The MARVEL domain maps to 60–269 (SPPGVIRILS…IIVFAVKTRR (210 aa)). A helical transmembrane segment spans residues 67–87 (ILSMLVIVMCIAVFACVASTL). Residues 88-140 (AWDRAYGTGIFGGSMNYPYGSGFGSYGGGFGGYGYGYGYGYGGYTDPRAAKGF) are Extracellular-facing. A helical transmembrane segment spans residues 141 to 161 (LLAMAAFCFIASLVIFVTSVI). Residues 162–173 (RSGMSRTRRYYL) are Cytoplasmic-facing. Residues 174-194 (IVIIVSAILGIMVFIATIVYI) traverse the membrane as a helical segment. The Extracellular portion of the chain corresponds to 195–244 (MGVNPTAQASGSMYGSQIYTICSQFYTPGGTGLYVDQYLYHYCVVDPQEA). A disulfide bridge links cysteine 216 with cysteine 237. Residues 245–265 (IAIVLGFMIIVAFALIIVFAV) form a helical membrane-spanning segment. At 266–523 (KTRRKMDRYD…MVGDYDRRKT (258 aa)) the chain is on the cytoplasmic side. Serine 302 is subject to Phosphoserine. Residues 302-338 (SAGTQDMPPPPSDYAERVDSPMAYSSNGKVNGKRSYP) are disordered. Threonine 305 carries the post-translational modification Phosphothreonine. Residues serine 313, serine 321, serine 340, and serine 360 each carry the phosphoserine modification. A disordered region spans residues 363 to 408 (DFRQPRYSSNDNLETPSKRTPTKGKAGKAKRTDPDHYETDYTTGGE). Polar residues predominate over residues 368–381 (RYSSNDNLETPSKR). Phosphotyrosine is present on tyrosine 369. Residues serine 370 and serine 371 each carry the phosphoserine modification. A compositionally biased stretch (basic residues) spans 382-391 (TPTKGKAGKA). A compositionally biased stretch (basic and acidic residues) spans 392–401 (KRTDPDHYET). 2 positions are modified to phosphotyrosine: tyrosine 399 and tyrosine 403. Residues threonine 404 and threonine 405 each carry the phosphothreonine; by PKC/PRKCH modification. Serine 409 is subject to Phosphoserine. The region spanning 415-523 (EDWLREYPPI…MVGDYDRRKT (109 aa)) is the OCEL domain. A coiled-coil region spans residues 433 to 489 (YKRNFDAGLQEYKSLLAELDEVNKELSRLDRELDDYREESEEYMAAADEYNRLKQVK). Residue serine 491 is modified to Phosphoserine.

It belongs to the ELL/occludin family. As to quaternary structure, interacts with TJP1/ZO1. Interacts with VAPA. Interacts with CLDN1, CLDN6, CLDN9, CLDN11, CLDN12 and CLDN17. Interacts with PLSCR1. Interacts with LSR, ILDR1 and ILDR2. Interacts with TJP2/ZO2. In terms of processing, dephosphorylated by PTPRJ.

It is found in the cell membrane. Its subcellular location is the cell junction. The protein localises to the tight junction. Functionally, may play a role in the formation and regulation of the tight junction (TJ) paracellular permeability barrier. May be involved in the organization of actin in endothelial cells. This Rattus norvegicus (Rat) protein is Occludin (Ocln).